Here is a 554-residue protein sequence, read N- to C-terminus: Hydroxylamine reductase (554 aa).

Cys-3, Cys-6, Cys-18, and Cys-25 together coordinate [2Fe-2S] cluster. Residues His-252, Glu-276, Cys-320, Cys-408, Cys-436, Cys-461, Glu-495, and Lys-497 each coordinate hybrid [4Fe-2O-2S] cluster. At Cys-408 the chain carries Cysteine persulfide.

Belongs to the HCP family. The cofactor is [2Fe-2S] cluster. Hybrid [4Fe-2O-2S] cluster is required as a cofactor.

It is found in the cytoplasm. The enzyme catalyses A + NH4(+) + H2O = hydroxylamine + AH2 + H(+). In terms of biological role, catalyzes the reduction of hydroxylamine to form NH(3) and H(2)O. The sequence is that of Hydroxylamine reductase from Shewanella baltica (strain OS223).